A 514-amino-acid polypeptide reads, in one-letter code: Peptide chain release factor 3 (514 aa).

The region spanning 8–268 (KKRRTFAIIS…SFLAFAPEPH (261 aa)) is the tr-type G domain. Residues 17-24 (SHPDAGKT), 85-89 (DTPGH), and 139-142 (NKLD) each bind GTP.

The protein belongs to the TRAFAC class translation factor GTPase superfamily. Classic translation factor GTPase family. PrfC subfamily.

It localises to the cytoplasm. Its function is as follows. Increases the formation of ribosomal termination complexes and stimulates activities of RF-1 and RF-2. It binds guanine nucleotides and has strong preference for UGA stop codons. It may interact directly with the ribosome. The stimulation of RF-1 and RF-2 is significantly reduced by GTP and GDP, but not by GMP. The chain is Peptide chain release factor 3 from Streptococcus mutans serotype c (strain ATCC 700610 / UA159).